The sequence spans 177 residues: Large ribosomal subunit protein uL5 (177 aa).

The protein belongs to the universal ribosomal protein uL5 family. As to quaternary structure, part of the 50S ribosomal subunit. Interacts with protein L18 and the 5S rRNA, and probably with tRNAs. Forms a bridge to the 30S subunit in the 70S ribosome.

This is 1 of 5 proteins that mediates the attachment of the 5S rRNA onto the large ribosomal subunit, stabilizing the orientation of adjacent RNA domains. Forms part of the central protuberance. Modeling places the A and P site tRNAs in close proximity to this protein; the 5S rRNA and some of its associated proteins might help stabilize positioning of ribosome-bound tRNAs. In the 70S ribosome it is thought to contact protein S13 of the 30S subunit (bridge B1b), connecting the 2 subunits; this bridge is implicated in subunit movement. The sequence is that of Large ribosomal subunit protein uL5 (rpl5) from Haloarcula marismortui (strain ATCC 43049 / DSM 3752 / JCM 8966 / VKM B-1809) (Halobacterium marismortui).